Here is a 427-residue protein sequence, read N- to C-terminus: MSSIVVVGTQWGDEGKGKITDFLAEQSDVIARFSGGNNAGHTIQFGGETYKLHLVPSGIFYKDKLAVIGNGVVVDPVALLKELDGLNERGIPTSNLRISNRAQVILPYHLAQDEYEERLRGDNKIGTTKKGIGPAYVDKVQRIGIRMADLLEKETFERLLKSNIEYKQAYFKGMFNETCPSFDDIFEEYYAAGQRLKEFVTDTSKILDDAFVADEKVLFEGAQGVMLDIDHGTYPFVTSSNPIAGNVTVGTGVGPTFVSKVIGVCKAYTSRVGDGPFPTELFDEDGHHIREVGREYGTTTGRPRRVGWFDSVVLRHSRRVSGITDLSINSIDVLTGLDTVKICTAYELDGKEITEYPANLDQLKRCKPIFEELPGWTEDVTNVRTLEELPENARKYLERISELCNVQISIFSVGPDREQTNLLKELW.

Residues 12 to 18 (GDEGKGK) and 40 to 42 (GHT) contribute to the GTP site. Asp-13 functions as the Proton acceptor in the catalytic mechanism. Positions 13 and 40 each coordinate Mg(2+). Residues 13–16 (DEGK), 38–41 (NAGH), Thr-128, Arg-142, Gln-223, Thr-238, and Arg-302 each bind IMP. Catalysis depends on His-41, which acts as the Proton donor. 298 to 304 (TTTGRPR) provides a ligand contact to substrate. Residues Arg-304, 330 to 332 (SID), and 412 to 414 (SVG) each bind GTP.

The protein belongs to the adenylosuccinate synthetase family. In terms of assembly, homodimer. Mg(2+) is required as a cofactor.

The protein resides in the cytoplasm. It catalyses the reaction IMP + L-aspartate + GTP = N(6)-(1,2-dicarboxyethyl)-AMP + GDP + phosphate + 2 H(+). The protein operates within purine metabolism; AMP biosynthesis via de novo pathway; AMP from IMP: step 1/2. Plays an important role in the de novo pathway of purine nucleotide biosynthesis. Catalyzes the first committed step in the biosynthesis of AMP from IMP. This is Adenylosuccinate synthetase from Staphylococcus aureus (strain MW2).